The sequence spans 342 residues: DNA-directed RNA polymerase subunit alpha (342 aa).

Residues 1–239 (MTTFLAKNWS…DQLQVFINFQ (239 aa)) are alpha N-terminal domain (alpha-NTD). Positions 254–342 (INPVLLKKVY…SLAKKHEDQY (89 aa)) are alpha C-terminal domain (alpha-CTD).

Belongs to the RNA polymerase alpha chain family. In terms of assembly, homodimer. The RNAP catalytic core consists of 2 alpha, 1 beta, 1 beta' and 1 omega subunit. When a sigma factor is associated with the core the holoenzyme is formed, which can initiate transcription.

It carries out the reaction RNA(n) + a ribonucleoside 5'-triphosphate = RNA(n+1) + diphosphate. Its function is as follows. DNA-dependent RNA polymerase catalyzes the transcription of DNA into RNA using the four ribonucleoside triphosphates as substrates. The chain is DNA-directed RNA polymerase subunit alpha from Orientia tsutsugamushi (strain Ikeda) (Rickettsia tsutsugamushi).